The following is a 770-amino-acid chain: Protein PAT1 homolog 1 (770 aa).

Residues 1-42 form a disordered region; the sequence is MFRYESLEDCPLDEDEDAFQGLGEEDEEIDQFNDDTFGSGAV. A region A; interaction with DDX6/RCK region spans residues 1-84; that stretch reads MFRYESLEDC…EMDLLGDHEE (84 aa). Residues 1 to 397 form an involved in nuclear foci localization region; that stretch reads MFRYESLEDC…HRVSHQDHLR (397 aa). Acidic residues predominate over residues 7–33; the sequence is LEDCPLDEDEDAFQGLGEEDEEIDQFN. The tract at residues 85-388 is region N; interaction with decapping machinery; that stretch reads NLAERLSKMV…LNGTGDRGGH (304 aa). The Nuclear export signal signature appears at 86–95; sequence LAERLSKMVI. S177 carries the phosphoserine modification. T178 is subject to Phosphothreonine. Phosphoserine is present on residues S179 and S184. The residue at position 194 (T194) is a Phosphothreonine. 3 positions are modified to asymmetric dimethylarginine: R217, R223, and R263. The involved in RNA-binding stretch occupies residues 223–397; it reads RYPAPYGERM…HRVSHQDHLR (175 aa). S278 carries the post-translational modification Phosphoserine. R284 carries the asymmetric dimethylarginine modification. Disordered stretches follow at residues 320–341 and 369–394; these read SAPPPATPPPQQHPPGPGPHLQ and QLQSRNQHRNLNGTGDRGGHRVSHQD. Residues 321–337 are compositionally biased toward pro residues; the sequence is APPPATPPPQQHPPGPG. Low complexity predominate over residues 369 to 380; that stretch reads QLQSRNQHRNLN. Position 385 is an omega-N-methylarginine (R385). The segment covering 385–394 has biased composition (basic and acidic residues); the sequence is RGGHRVSHQD. A region H region spans residues 389–448; sequence RVSHQDHLRKDPYANLMLQREKDWVSKIQMMQLQSTDPYLDDFYYQNYFEKLEKSSAAEE. Residues 398-770 form an involved in nuclear speckle localization region; it reads KDPYANLMLQ…TKLQLVQGMR (373 aa). The region C stretch occupies residues 449–770; sequence MQGDGPKKER…TKLQLVQGMR (322 aa).

It belongs to the PAT1 family. Interacts (via region A) with DDX6/RCK. Interacts (via region H and region C) with LSM1 and LSM4. Interacts (via region N) with DCP1A, DCP2, EDC3, EDC4 and XRN1. Interacts with the CCR4-NOT complex. Interacts with the Lsm-containing SMN-Sm protein complex. Interacts with EIF4ENIF1/4E-T.

The protein resides in the cytoplasm. It is found in the P-body. Its subcellular location is the nucleus. It localises to the PML body. The protein localises to the nucleus speckle. Its function is as follows. RNA-binding protein involved in deadenylation-dependent decapping of mRNAs, leading to the degradation of mRNAs. Acts as a scaffold protein that connects deadenylation and decapping machinery. Required for cytoplasmic mRNA processing body (P-body) assembly. This Rattus norvegicus (Rat) protein is Protein PAT1 homolog 1 (Patl1).